Reading from the N-terminus, the 142-residue chain is MTDVAKTLEELCTERGMRMTEQRRVIARILEDSEDHPDVEELYRRSVKVDAKISISTVYRTVKLFEDAGIIARHDFRDGRSRYETVPEEHHDHLIDLKTGTVIEFRSPEIEALQERIAREHGFRLVDHRLELYGVPLKKEDL.

The tract at residues 1–87 (MTDVAKTLEE…DGRSRYETVP (87 aa)) is DNA-binding. Zn(2+) is bound by residues H36 and E84. The segment at 88-142 (EEHHDHLIDLKTGTVIEFRSPEIEALQERIAREHGFRLVDHRLELYGVPLKKEDL) is dimerization. Residues H90 and D92 each coordinate Fe cation. Zn(2+) is bound by residues H93 and E104. Fe cation-binding residues include E111 and H128.

This sequence belongs to the Fur family. In terms of assembly, homodimer.

The protein localises to the cytoplasm. Acts as a global negative controlling element, employing Fe(2+) as a cofactor to bind the operator of the repressed genes. This Rhizobium leguminosarum bv. viciae protein is Ferric uptake regulation protein (fur).